The sequence spans 145 residues: Holo-[acyl-carrier-protein] synthase (145 aa).

Aspartate 9 and glutamate 59 together coordinate Mg(2+).

The protein belongs to the P-Pant transferase superfamily. AcpS family. Mg(2+) serves as cofactor.

It is found in the cytoplasm. It carries out the reaction apo-[ACP] + CoA = holo-[ACP] + adenosine 3',5'-bisphosphate + H(+). Its function is as follows. Transfers the 4'-phosphopantetheine moiety from coenzyme A to a Ser of acyl-carrier-protein. This chain is Holo-[acyl-carrier-protein] synthase, found in Nocardia farcinica (strain IFM 10152).